Here is a 562-residue protein sequence, read N- to C-terminus: Protein wntless (562 aa).

Residues 1–13 lie on the Cytoplasmic side of the membrane; that stretch reads MSGTILENLSGRK. The helical transmembrane segment at 14 to 34 threads the bilayer; it reads LSILVGSLLLCQVLCFLLGGL. Over 35–239 the chain is Lumenal; it reads YAPVPAGHTN…AIHQNGGFTH (205 aa). Residue Asn-58 is glycosylated (N-linked (GlcNAc...) asparagine). The helical transmembrane segment at 240 to 260 threads the bilayer; that stretch reads VWLMLKTLLFPFVVGIMVWFW. Residues 261–270 lie on the Cytoplasmic side of the membrane; it reads RRVHLLQRSP. The helical transmembrane segment at 271–291 threads the bilayer; it reads ALLEYMLLYLGGALTFLNLPL. The Lumenal segment spans residues 292-311; that stretch reads EYLSLTIEMPYMLLLSDIRQ. A helical transmembrane segment spans residues 312 to 332; the sequence is GIFYAMLLSFWLVFAGEHMLI. Residues 333 to 344 lie on the Cytoplasmic side of the membrane; it reads QDSSNKSTIRSR. A helical membrane pass occupies residues 345–365; the sequence is YWKHLSAVVVGCISLFVFDIS. Residues 366 to 386 lie on the Lumenal side of the membrane; the sequence is ERGVQLRNPFYSIWTTPLGAK. Residues 387–407 traverse the membrane as a helical segment; the sequence is VAMSFILLAGVSAAVYFLFLC. Residues 408–441 are Cytoplasmic-facing; it reads YMISKVFKNIGDKRTSLPSMSQARRLHYEGLIYR. A helical membrane pass occupies residues 442–462; that stretch reads FKFLMLATLLCAALTVTGFIM. The Lumenal portion of the chain corresponds to 463 to 482; the sequence is GQMAEGQWKWNDDVEIQLTS. A helical membrane pass occupies residues 483–503; that stretch reads AFLTGVYGMWNIYIFALLILY. Over 504 to 562 the chain is Cytoplasmic; sequence APSHKQWPTMHHSDETTQSNENIVASAASEEIEFSNLPSDSNPSEISSLTSFTRKVAFE. Residues 538 to 562 are disordered; the sequence is SNLPSDSNPSEISSLTSFTRKVAFE. Over residues 539-556 the composition is skewed to polar residues; the sequence is NLPSDSNPSEISSLTSFT.

This sequence belongs to the wntless family. As to quaternary structure, interacts with wg; in the Golgi. Interacts with Vps35, a component of the retromer complex; wls stability is regulated by Vps35.

It localises to the presynaptic cell membrane. The protein localises to the postsynaptic cell membrane. The protein resides in the cell membrane. Its subcellular location is the endoplasmic reticulum membrane. It is found in the endosome membrane. It localises to the golgi apparatus membrane. Functionally, a segment polarity gene required for wingless (wg)-dependent patterning processes, acting in both wg-sending cells and wg-target cells. In non-neuronal cells wls directs wg secretion. The wls traffic loop encompasses the Golgi, the cell surface, an endocytic compartment and a retrograde route leading back to the Golgi, and involves clathrin-mediated endocytosis and the retromer complex (a conserved protein complex consisting of Vps35 and Vps26). In neuronal cells (the larval motorneuron NMJ), the wg signal moves across the synapse via the release of wls-containing exosome-like vesicles. Postsynaptic wls is required for the trafficking of fz2 through the fz2-interacting protein Grip. The protein is Protein wntless of Drosophila pseudoobscura pseudoobscura (Fruit fly).